Here is a 177-residue protein sequence, read N- to C-terminus: Large ribosomal subunit protein uL6 (177 aa).

It belongs to the universal ribosomal protein uL6 family. In terms of assembly, part of the 50S ribosomal subunit.

Its function is as follows. This protein binds to the 23S rRNA, and is important in its secondary structure. It is located near the subunit interface in the base of the L7/L12 stalk, and near the tRNA binding site of the peptidyltransferase center. This Bradyrhizobium sp. (strain BTAi1 / ATCC BAA-1182) protein is Large ribosomal subunit protein uL6.